Here is a 354-residue protein sequence, read N- to C-terminus: Uroporphyrinogen decarboxylase (354 aa).

Substrate-binding positions include 27-31 (RQAGR), aspartate 77, tyrosine 154, threonine 209, and histidine 327.

It belongs to the uroporphyrinogen decarboxylase family. In terms of assembly, homodimer.

The protein localises to the cytoplasm. The enzyme catalyses uroporphyrinogen III + 4 H(+) = coproporphyrinogen III + 4 CO2. The protein operates within porphyrin-containing compound metabolism; protoporphyrin-IX biosynthesis; coproporphyrinogen-III from 5-aminolevulinate: step 4/4. In terms of biological role, catalyzes the decarboxylation of four acetate groups of uroporphyrinogen-III to yield coproporphyrinogen-III. The chain is Uroporphyrinogen decarboxylase from Pseudomonas putida (strain W619).